The sequence spans 141 residues: Metallothiol transferase FosB (141 aa).

A VOC domain is found at 5 to 120 (SINHLLFSVS…DGHKFEFHTG (116 aa)). Positions 8, 67, and 116 each coordinate Mg(2+). Glu116 acts as the Proton donor/acceptor in catalysis.

It belongs to the fosfomycin resistance protein family. FosB subfamily. Homodimer. Mg(2+) serves as cofactor.

It is found in the cytoplasm. Metallothiol transferase which confers resistance to fosfomycin by catalyzing the addition of a thiol cofactor to fosfomycin. L-cysteine is probably the physiological thiol donor. This Lysinibacillus sphaericus (strain C3-41) protein is Metallothiol transferase FosB.